Reading from the N-terminus, the 334-residue chain is Large ribosomal subunit protein uL3 (334 aa).

The segment covering 1–10 (MGMKKSRPRR) has biased composition (basic residues). Positions 1–20 (MGMKKSRPRRGSLAFSPRKR) are disordered.

This sequence belongs to the universal ribosomal protein uL3 family. As to quaternary structure, part of the 50S ribosomal subunit. Forms a cluster with proteins L14 and L24e.

Functionally, one of the primary rRNA binding proteins, it binds directly near the 3'-end of the 23S rRNA, where it nucleates assembly of the 50S subunit. The sequence is that of Large ribosomal subunit protein uL3 from Methanococcus maripaludis (strain C6 / ATCC BAA-1332).